The chain runs to 163 residues: MNDMVCAGRVTSTHGVRGCVRFRSYMSVDFKFPGIDVSIGGVSYTVCGAFSRGFPMFVLTLSRVGSACEAEKLVGFDVFLSESLLPPLQVGEYYCKDLVGLAVYDLEECVGHVSMLYDFGAAAEVLEIVLLSGKKVMIPFTSAFVADIDLNKKRLAVVFPPEI.

Residues 90–155 (VGEYYCKDLV…ADIDLNKKRL (66 aa)) enclose the PRC barrel domain.

The protein belongs to the RimM family. In terms of assembly, binds ribosomal protein uS19.

It localises to the cytoplasm. In terms of biological role, an accessory protein needed during the final step in the assembly of 30S ribosomal subunit, possibly for assembly of the head region. Essential for efficient processing of 16S rRNA. May be needed both before and after RbfA during the maturation of 16S rRNA. It has affinity for free ribosomal 30S subunits but not for 70S ribosomes. In Neorickettsia sennetsu (strain ATCC VR-367 / Miyayama) (Ehrlichia sennetsu), this protein is Ribosome maturation factor RimM.